The sequence spans 271 residues: Putative two-component membrane permease complex subunit SMU_746c (271 aa).

Transmembrane regions (helical) follow at residues 34-54 and 70-90; these read LAYISMALSFILALVQLTIWM and FFSPIILAIPVFIGLLVPTVP.

The protein belongs to the UPF0703 family. Interacts with SMU_747c.

The protein localises to the cell membrane. Could be part of a two-component membrane permease system responsible for amino acid transport under low pH. Involved in acidogenesis, biofilm formation and low-pH survival. The sequence is that of Putative two-component membrane permease complex subunit SMU_746c from Streptococcus mutans serotype c (strain ATCC 700610 / UA159).